Consider the following 617-residue polypeptide: Ceramide transfer protein (617 aa).

A compositionally biased stretch (polar residues) spans 1–11 (MSDNQSWNSSG). Residues 1–23 (MSDNQSWNSSGSEEDLETESGPP) are disordered. In terms of domain architecture, PH spans 23 to 117 (PVERCGVLSK…WIDSIEQHKS (95 aa)). The stretch at 268-302 (REDSWQKRLDKEIEKRRRVEEAYKNAMTELKKKSH) forms a coiled coil. The short motif at 320 to 326 (EFFDAVE) is the FFAT element. Residues 332 to 344 (QDKIEQSQSEKGR) are compositionally biased toward basic and acidic residues. The interval 332–355 (QDKIEQSQSEKGRSHWPSSLPSTE) is disordered. Positions 383-611 (DEHRFRIQVE…FTSYVQEKTA (229 aa)) constitute an START domain. Residues E466, Q487, N524, and Y572 each contribute to the an N-acylsphing-4-enine site.

The protein resides in the cytoplasm. It is found in the golgi apparatus. The protein localises to the endoplasmic reticulum. The enzyme catalyses N-hexadecanoylsphing-4-enine(in) = N-hexadecanoylsphing-4-enine(out). May mediate the intracellular trafficking of ceramide in a non-vesicular manner. The polypeptide is Ceramide transfer protein (cert1) (Xenopus tropicalis (Western clawed frog)).